Here is a 298-residue protein sequence, read N- to C-terminus: MGSATPSRLQKFPATAPADEIYAAFKEDGCVIIEGFVPPDQMARFSQEIQPAMEKIQVQVTNDGNSNDRVKRFSKLVTTSPTFRHEILENDLMHELLQRVFSKPGEGMGYHFNDTMVIEVQPGAPAQRLHRDQELYPWWNSMGPDAPECLVNFFCAVTPFTVENGATRLVPGSNRWPELTLINATDCPQYGKIDSVPAIMQPGDCYMMSGKVIHGAGHNATLSDQRRALAFSTIRRELRPVQAFPLWIPMQIATELSPRTQAMFGFRSSTQHCDVDTVHFWGNDGKDIGEHLGLISSA.

Residues arginine 72 and glutamine 127 each contribute to the substrate site. 2 residues coordinate Fe cation: histidine 130 and aspartate 132. Substrate is bound at residue threonine 167. Fe cation is bound at residue histidine 214. Arginine 226 is a substrate binding site.

The protein belongs to the PhyH family. Homodimer. Requires Fe cation as cofactor.

The enzyme catalyses preaustinoid A1 + 2-oxoglutarate + O2 = preaustinoid A2 + succinate + CO2 + H2O. It catalyses the reaction preaustinoid A2 + 2-oxoglutarate + O2 = preaustinoid A3 + succinate + CO2 + H2O. The catalysed reaction is berkeleyone A + 2-oxoglutarate + O2 = preaustinoid A + succinate + CO2 + H2O. The protein operates within secondary metabolite biosynthesis; terpenoid biosynthesis. Its function is as follows. Multifunctional dioxygenase; part of the gene cluster B that mediates the biosynthesis of austinol and dehydroaustinol, two fungal meroterpenoids. The first step of the pathway is the synthesis of 3,5-dimethylorsellinic acid by the polyketide synthase ausA. 3,5-dimethylorsellinic acid is then prenylated by the polyprenyl transferase ausN. Further epoxidation by the FAD-dependent monooxygenase ausM and cyclization by the probable terpene cyclase ausL lead to the formation of protoaustinoid A. Protoaustinoid A is then oxidized to spiro-lactone preaustinoid A3 by the combined action of the FAD-binding monooxygenases ausB and ausC, and the dioxygenase ausE. Acid-catalyzed keto-rearrangement and ring contraction of the tetraketide portion of preaustinoid A3 by ausJ lead to the formation of preaustinoid A4. The aldo-keto reductase ausK, with the help of ausH, is involved in the next step by transforming preaustinoid A4 into isoaustinone which is in turn hydroxylated by the P450 monooxygenase ausI to form austinolide. Finally, the cytochrome P450 monooxygenase ausG modifies austinolide to austinol. Austinol can be further modified to dehydroaustinol which forms a diffusible complex with diorcinol that initiates conidiation. Due to genetic rearrangements of the clusters and the subsequent loss of some enzymes, the end products of the Emericella nidulans austinoid biosynthesis clusters are austinol and dehydroaustinol, even if additional enzymes, such as the O-acetyltransferase ausQ and the cytochrome P450 monooxygenase ausR are still functional. The chain is Multifunctional dioxygenase ausE from Emericella nidulans (strain FGSC A4 / ATCC 38163 / CBS 112.46 / NRRL 194 / M139) (Aspergillus nidulans).